Consider the following 553-residue polypeptide: HTH-type transcriptional regulator SgrR (553 aa).

The 117-residue stretch at M1–Q117 folds into the HTH marR-type domain. Residues L26 to Q49 constitute a DNA-binding region (H-T-H motif). The interval E163–W494 is solute-binding.

Activates the small RNA gene sgrS under glucose-phosphate stress conditions as well as yfdZ. Represses its own transcription under both stress and non-stress conditions. Might act as a sensor of the intracellular accumulation of phosphoglucose by binding these molecules in its C-terminal solute-binding domain. This Yersinia enterocolitica serotype O:8 / biotype 1B (strain NCTC 13174 / 8081) protein is HTH-type transcriptional regulator SgrR.